The primary structure comprises 123 residues: Large ribosomal subunit protein bL12 (123 aa).

The protein belongs to the bacterial ribosomal protein bL12 family. As to quaternary structure, homodimer. Part of the ribosomal stalk of the 50S ribosomal subunit. Forms a multimeric L10(L12)X complex, where L10 forms an elongated spine to which 2 to 4 L12 dimers bind in a sequential fashion. Binds GTP-bound translation factors.

Its function is as follows. Forms part of the ribosomal stalk which helps the ribosome interact with GTP-bound translation factors. Is thus essential for accurate translation. This Marinomonas sp. (strain MWYL1) protein is Large ribosomal subunit protein bL12.